Consider the following 100-residue polypeptide: MKITQEEVTHVANLSKLRFSEKETAAFATTLSKIVDMVELLGEVDTTGVAPTTTMADRKTVLRPDVAEEGTDRDRLFKNVPEQDNYYIKVPAILDDGGDA.

This sequence belongs to the GatC family. Heterotrimer of A, B and C subunits.

It catalyses the reaction L-glutamyl-tRNA(Gln) + L-glutamine + ATP + H2O = L-glutaminyl-tRNA(Gln) + L-glutamate + ADP + phosphate + H(+). The enzyme catalyses L-aspartyl-tRNA(Asn) + L-glutamine + ATP + H2O = L-asparaginyl-tRNA(Asn) + L-glutamate + ADP + phosphate + 2 H(+). Functionally, allows the formation of correctly charged Asn-tRNA(Asn) or Gln-tRNA(Gln) through the transamidation of misacylated Asp-tRNA(Asn) or Glu-tRNA(Gln) in organisms which lack either or both of asparaginyl-tRNA or glutaminyl-tRNA synthetases. The reaction takes place in the presence of glutamine and ATP through an activated phospho-Asp-tRNA(Asn) or phospho-Glu-tRNA(Gln). The sequence is that of Aspartyl/glutamyl-tRNA(Asn/Gln) amidotransferase subunit C from Streptococcus pneumoniae (strain P1031).